Reading from the N-terminus, the 206-residue chain is Small ribosomal subunit protein uS4 (206 aa).

One can recognise an S4 RNA-binding domain in the interval 98-176 (RRLDNVVYRL…APKWLEANRE (79 aa)).

The protein belongs to the universal ribosomal protein uS4 family. Part of the 30S ribosomal subunit. Contacts protein S5. The interaction surface between S4 and S5 is involved in control of translational fidelity.

In terms of biological role, one of the primary rRNA binding proteins, it binds directly to 16S rRNA where it nucleates assembly of the body of the 30S subunit. Its function is as follows. With S5 and S12 plays an important role in translational accuracy. The sequence is that of Small ribosomal subunit protein uS4 from Gloeobacter violaceus (strain ATCC 29082 / PCC 7421).